Reading from the N-terminus, the 644-residue chain is 1-deoxy-D-xylulose-5-phosphate synthase (644 aa).

Thiamine diphosphate contacts are provided by residues H78 and G120 to A122. A Mg(2+)-binding site is contributed by D149. Thiamine diphosphate-binding positions include A150–A151, N178, and E373. N178 contributes to the Mg(2+) binding site.

This sequence belongs to the transketolase family. DXPS subfamily. In terms of assembly, homodimer. Mg(2+) serves as cofactor. Requires thiamine diphosphate as cofactor.

It carries out the reaction D-glyceraldehyde 3-phosphate + pyruvate + H(+) = 1-deoxy-D-xylulose 5-phosphate + CO2. It participates in metabolic intermediate biosynthesis; 1-deoxy-D-xylulose 5-phosphate biosynthesis; 1-deoxy-D-xylulose 5-phosphate from D-glyceraldehyde 3-phosphate and pyruvate: step 1/1. Catalyzes the acyloin condensation reaction between C atoms 2 and 3 of pyruvate and glyceraldehyde 3-phosphate to yield 1-deoxy-D-xylulose-5-phosphate (DXP). This Chlamydia caviae (strain ATCC VR-813 / DSM 19441 / 03DC25 / GPIC) (Chlamydophila caviae) protein is 1-deoxy-D-xylulose-5-phosphate synthase.